Reading from the N-terminus, the 638-residue chain is RAF proto-oncogene serine/threonine-protein kinase (638 aa).

At Ser-43 the chain carries Phosphoserine. Residues 56 to 130 (STMRVYLPNK…VGAELQVDFL (75 aa)) enclose the RBD domain. Residues 137-183 (THNFVRKTFLKLAFCDICQKFLLNAFRCQTCGYKFHEHCSTKVPTMC) form a Phorbol-ester/DAG-type zinc finger. Residues His-138, Cys-151, Cys-154, Cys-164, Cys-167, His-172, Cys-175, and Cys-183 each coordinate Zn(2+). Position 257 is a phosphoserine (Ser-257). Thr-266 is subject to Phosphothreonine; by autocatalysis. The segment at 279 to 323 (LRSHSESGSPNNLSPTGWSNAKAPAPTHREKAASSTGQEKNKIRA) is disordered. A compositionally biased stretch (polar residues) spans 284-297 (ESGSPNNLSPTGWS). At Ser-329 the chain carries Phosphoserine. The Protein kinase domain occupies 340–600 (VMLSSRIGSG…PQILSSIELL (261 aa)). ATP contacts are provided by residues 346–354 (IGSGSFGTV) and Lys-366. Asp-459 serves as the catalytic Proton acceptor. A Phosphoserine modification is found at Ser-490.

The protein belongs to the protein kinase superfamily. TKL Ser/Thr protein kinase family. RAF subfamily. Requires Zn(2+) as cofactor. Post-translationally, phosphorylation at Ser-257 inactivates kinase activity. Dephosphorylation of Ser-257 by a complex containing protein phosphatase 1 relieves inactivation, leading to stimulate RAF1 activity.

It is found in the cytoplasm. It localises to the cell membrane. The catalysed reaction is L-seryl-[protein] + ATP = O-phospho-L-seryl-[protein] + ADP + H(+). It catalyses the reaction L-threonyl-[protein] + ATP = O-phospho-L-threonyl-[protein] + ADP + H(+). Functionally, serine/threonine-protein kinase that acts as a regulatory link between the membrane-associated Ras GTPases and the MAPK/ERK cascade, and this critical regulatory link functions as a switch determining cell fate decisions. RAF1 activation initiates a mitogen-activated protein kinase (MAPK) cascade that comprises a sequential phosphorylation of the dual-specific MAPK kinases (MAP2K1/MEK1 and MAP2K2/MEK2) and the extracellular signal-regulated kinases (MAPK3/ERK1 and MAPK1/ERK2). The chain is RAF proto-oncogene serine/threonine-protein kinase (raf1) from Xenopus laevis (African clawed frog).